The primary structure comprises 107 residues: UPF0122 protein STH1464 (107 aa).

The protein belongs to the UPF0122 family.

Functionally, might take part in the signal recognition particle (SRP) pathway. This is inferred from the conservation of its genetic proximity to ftsY/ffh. May be a regulatory protein. The polypeptide is UPF0122 protein STH1464 (Symbiobacterium thermophilum (strain DSM 24528 / JCM 14929 / IAM 14863 / T)).